An 87-amino-acid chain; its full sequence is Small ribosomal subunit protein bS20 (87 aa).

Residues 1–26 are disordered; it reads MANIKSAQKRAVQSEKRRQHNASQRS.

It belongs to the bacterial ribosomal protein bS20 family.

In terms of biological role, binds directly to 16S ribosomal RNA. The chain is Small ribosomal subunit protein bS20 from Glaesserella parasuis serovar 5 (strain SH0165) (Haemophilus parasuis).